The sequence spans 112 residues: Peptidyl-prolyl cis-trans isomerase FKBP12 (112 aa).

The interval methionine 1–cysteine 26 is disordered. One can recognise a PPIase FKBP-type domain in the interval glycine 19–glutamine 112. A disulfide bridge links cysteine 26 with cysteine 80.

Belongs to the FKBP-type PPIase family. In terms of assembly, interacts with FIP37 and with the immunosuppressive drug FK506. Its interaction with FIP37 is inhibited by FK506. Interacts with TOR in a rapamycin-dependent manner.

It localises to the cytoplasm. It carries out the reaction [protein]-peptidylproline (omega=180) = [protein]-peptidylproline (omega=0). PPIases accelerate the folding of proteins. It catalyzes the cis-trans isomerization of proline imidic peptide bonds in oligopeptides. Mediates rapamycin inactivation of TOR protein kinase activity. The protein is Peptidyl-prolyl cis-trans isomerase FKBP12 (FKBP12) of Arabidopsis thaliana (Mouse-ear cress).